A 363-amino-acid polypeptide reads, in one-letter code: Ribosome-binding ATPase YchF (363 aa).

The OBG-type G domain occupies 3–257 (FKCGFVGLPN…VSAYDHLSLK (255 aa)). 12–17 (NVGKST) contributes to the ATP binding site. Residues S16 and T36 each coordinate Mg(2+). The 84-residue stretch at 278–361 (NLITFFTAGK…CDGDIIHVLY (84 aa)) folds into the TGS domain.

This sequence belongs to the TRAFAC class OBG-HflX-like GTPase superfamily. OBG GTPase family. YchF/OLA1 subfamily. It depends on Mg(2+) as a cofactor.

In terms of biological role, ATPase that binds to both the 70S ribosome and the 50S ribosomal subunit in a nucleotide-independent manner. This is Ribosome-binding ATPase YchF from Buchnera aphidicola subsp. Baizongia pistaciae (strain Bp).